A 483-amino-acid chain; its full sequence is Ankyrin repeat domain-containing protein M-T5 (483 aa).

ANK repeat units lie at residues 32–63 (SRDT…DVNG), 67–101 (SRTS…DVNA), 105–137 (DGRY…SVYV), 177–210 (YGFN…DSSR), 250–279 (LDFT…DPNV), and 283–312 (LGNS…TPDA). The PRANC/F-box-like stretch occupies residues 390-478 (VSVFDTAFGL…LTDDEIHDLF (89 aa)).

Interacts (via PRANC/F-box-like domain) with the SKP1 component of the host SCF ubiquitin ligase complex. Interacts (via N-terminus) with host AKT1.

Functionally, substrate-specific adapter of SKP1-containing E3 ubiquitin-protein ligases which mediate the ubiquitination and subsequent proteasomal degradation of host target proteins including CDKN1B. Disappearance of host CDKN1B correlates with cell cycle progression through the G0/G1 checkpoint. Therefore, viruses in infected cells are protected from diverse innate host antiviral responses normally triggered by G0/G1 cell cycle arrest. In Myxoma virus (strain Lausanne) (MYXV), this protein is Ankyrin repeat domain-containing protein M-T5 (m005R).